Reading from the N-terminus, the 125-residue chain is MKKRSETLGSDQSSSEIIEHVLEELNLKNIERRVKKYDQIESEYKTNIENEKKAFIKDVSQVQQKIKEFEIQKANQIKQLNEEKLSIEARKQQLEIEIRNQLLQYAEKLRIVVKTPMNQPTNTEV.

Residues 45 to 104 (KTNIENEKKAFIKDVSQVQQKIKEFEIQKANQIKQLNEEKLSIEARKQQLEIEIRNQLLQ) adopt a coiled-coil conformation.

Component of linear elements (LinEs), which are similar to synaptonemal complexes, at least composed of rec27, rec25, rec10 and mug20.

The protein localises to the cytoplasm. Its subcellular location is the nucleus. It is found in the chromosome. Functionally, during meiotic DNA recombination, binds to and activates DNA double-strand break (DSB) hotspot sites. In Schizosaccharomyces pombe (strain 972 / ATCC 24843) (Fission yeast), this protein is Linear element protein rec27.